A 269-amino-acid polypeptide reads, in one-letter code: UPF0162 protein BU173 (269 aa).

This sequence belongs to the UPF0162 family.

The protein is UPF0162 protein BU173 of Buchnera aphidicola subsp. Acyrthosiphon pisum (strain APS) (Acyrthosiphon pisum symbiotic bacterium).